Reading from the N-terminus, the 268-residue chain is Large ribosomal subunit protein mL46 (268 aa).

The N-terminal 25 residues, 1-25, are a transit peptide targeting the mitochondrion; the sequence is MYLKRNIINMQRSFSRQFHISVRNS.

It belongs to the mitochondrion-specific ribosomal protein mL46 family. In terms of assembly, component of the mitochondrial large ribosomal subunit (mt-LSU). Mature yeast 74S mitochondrial ribosomes consist of a small (37S) and a large (54S) subunit. The 37S small subunit contains a 15S ribosomal RNA (15S mt-rRNA) and at least 32 different proteins. The 54S large subunit contains a 21S rRNA (21S mt-rRNA) and at least 45 different proteins.

The protein resides in the mitochondrion. Its function is as follows. Component of the mitochondrial ribosome (mitoribosome), a dedicated translation machinery responsible for the synthesis of mitochondrial genome-encoded proteins, including at least some of the essential transmembrane subunits of the mitochondrial respiratory chain. The mitoribosomes are attached to the mitochondrial inner membrane and translation products are cotranslationally integrated into the membrane. The polypeptide is Large ribosomal subunit protein mL46 (mrpl17) (Schizosaccharomyces pombe (strain 972 / ATCC 24843) (Fission yeast)).